The primary structure comprises 1070 residues: Ubiquitin-protein ligase E3B (1070 aa).

Residue Met1 is modified to N-acetylmethionine. The 30-residue stretch at 29–58 folds into the IQ domain; it reads RERSAVTIQALVRSFLCRRRLHRDIRKEID. The residue at position 421 (Ser421) is a Phosphoserine. In terms of domain architecture, HECT spans 704-1070; the sequence is SQHAMKGVIR…ISMNTGFELS (367 aa). Cys1038 serves as the catalytic Glycyl thioester intermediate.

Widely expressed. High expression is observed in developing central nervous system.

The protein resides in the postsynaptic density. The catalysed reaction is S-ubiquitinyl-[E2 ubiquitin-conjugating enzyme]-L-cysteine + [acceptor protein]-L-lysine = [E2 ubiquitin-conjugating enzyme]-L-cysteine + N(6)-ubiquitinyl-[acceptor protein]-L-lysine.. It participates in protein modification; protein ubiquitination. Its function is as follows. E3 ubiquitin-protein ligase which accepts ubiquitin from an E2 ubiquitin-conjugating enzyme in the form of a thioester and then directly transfers the ubiquitin to targeted substrates. Ubiquitinates BCKDK and targets it for degradation, thereby regulating various metabolic processes. Involved in the positive regulation of neurite branching in hippocampal neurons and the control of neuronal spine number and morphology, through the ubiquitination of PPP3CC. The sequence is that of Ubiquitin-protein ligase E3B (Ube3b) from Mus musculus (Mouse).